We begin with the raw amino-acid sequence, 673 residues long: Bifunctional lycopene cyclase/phytoene synthase (673 aa).

Residues 1–251 (MTALAYYQIH…IVLGLSACDH (251 aa)) are lycopene beta-cyclase. 7 consecutive transmembrane segments (helical) span residues 9 to 29 (IHLI…SPIL), 36 to 56 (KISI…SWII), 81 to 101 (YEEY…YVLA), 117 to 137 (SALS…LFTA), 157 to 177 (LSLL…EYAF), 187 to 207 (TIAA…VAVG), and 226 to 246 (VLPI…VLGL). Residues 258–673 (LHGRTIYGNK…SVVMSGWEGQ (416 aa)) are phytoene synthase. The disordered stretch occupies residues 376-399 (KILSSPLLPPSHPSRPTGMYPLPP).

In the N-terminal section; belongs to the lycopene beta-cyclase family. This sequence in the C-terminal section; belongs to the phytoene/squalene synthase family.

The protein localises to the membrane. The catalysed reaction is all-trans-lycopene = gamma-carotene. The enzyme catalyses gamma-carotene = all-trans-beta-carotene. It catalyses the reaction 2 (2E,6E,10E)-geranylgeranyl diphosphate = 15-cis-phytoene + 2 diphosphate. It participates in carotenoid biosynthesis; beta-carotene biosynthesis. The protein operates within carotenoid biosynthesis; phytoene biosynthesis; all-trans-phytoene from geranylgeranyl diphosphate: step 1/1. In terms of biological role, bifunctional enzyme that catalyzes the reactions from geranylgeranyl diphosphate to phytoene (phytoene synthase) and lycopene to beta-carotene via the intermediate gamma-carotene (lycopene cyclase). The cyclase preferentially catalyzes the symmetric cyclization of both ends of the substrate to produce dicyclic carotenoids. Beta-carotene is further processed to the acidic carotenoid astaxanthin. This is Bifunctional lycopene cyclase/phytoene synthase from Phaffia rhodozyma (Yeast).